Here is an 82-residue protein sequence, read N- to C-terminus: Myosin light chain alkali (82 aa).

The region spanning 7–42 (GCYEDFIECLKLYDKEENGTMLLAELQHALLALGEN) is the EF-hand domain.

Myosin is a hexamer of 2 heavy chains and 4 light chains.

This Drosophila teissieri (Fruit fly) protein is Myosin light chain alkali (Mlc1).